Consider the following 150-residue polypeptide: MGKPYFRGQSIHRLDAKGRLRIPTKFREVLQNHYTDALVITRMGECLLAYPPEEWEKIENKAREFSQVQPEHRAFMRYFISSAEECEFDNQGRILIPPFLREEANLTQDVLLAGVLTNFEIWNKSTWDAHIKLDKDSYQKIMEFMAGTGL.

SpoVT-AbrB domains are found at residues 9-54 and 83-126; these read QSIH…PPEE and AEEC…NKST.

It belongs to the MraZ family. In terms of assembly, forms oligomers.

Its subcellular location is the cytoplasm. It localises to the nucleoid. The sequence is that of Transcriptional regulator MraZ from Syntrophobacter fumaroxidans (strain DSM 10017 / MPOB).